The sequence spans 172 residues: MRKTDRHPVSGANSLWHVYQTVPFLKVVKNFIVIQIARYTPFIGMKNWLYRTFLRMKVGKQTSFALMVMPDIMFPEKISVGTNTIIGYNTTILAHEYLIHEYRIGKVLIGDEVMIGANTTILPGVKIGDGAVVSAGTLVHKDVPDGAFVGGNPMRIIYTKEEMQERLKKSAE.

The protein belongs to the transferase hexapeptide repeat family.

This chain is Putative acetyltransferase YvoF (yvoF), found in Bacillus subtilis (strain 168).